A 161-amino-acid chain; its full sequence is ATP synthase subunit b (161 aa).

The chain crosses the membrane as a helical span at residues 2–22; it reads VIEWGTALYQLLAFAVLLLIL.

The protein belongs to the ATPase B chain family. As to quaternary structure, F-type ATPases have 2 components, F(1) - the catalytic core - and F(0) - the membrane proton channel. F(1) has five subunits: alpha(3), beta(3), gamma(1), delta(1), epsilon(1). F(0) has three main subunits: a(1), b(2) and c(10-14). The alpha and beta chains form an alternating ring which encloses part of the gamma chain. F(1) is attached to F(0) by a central stalk formed by the gamma and epsilon chains, while a peripheral stalk is formed by the delta and b chains.

It localises to the cell membrane. F(1)F(0) ATP synthase produces ATP from ADP in the presence of a proton or sodium gradient. F-type ATPases consist of two structural domains, F(1) containing the extramembraneous catalytic core and F(0) containing the membrane proton channel, linked together by a central stalk and a peripheral stalk. During catalysis, ATP synthesis in the catalytic domain of F(1) is coupled via a rotary mechanism of the central stalk subunits to proton translocation. In terms of biological role, component of the F(0) channel, it forms part of the peripheral stalk, linking F(1) to F(0). The polypeptide is ATP synthase subunit b (Shouchella clausii (strain KSM-K16) (Alkalihalobacillus clausii)).